The primary structure comprises 406 residues: Dual-specificity RNA methyltransferase RlmN (406 aa).

E119 serves as the catalytic Proton acceptor. The region spanning 125-370 (DKGRGTLCVS…AMVRRTRGDD (246 aa)) is the Radical SAM core domain. C132 and C375 are disulfide-bonded. [4Fe-4S] cluster is bound by residues C139, C143, and C146. S-adenosyl-L-methionine contacts are provided by residues 192–193 (GE), S224, 246–248 (SLH), and N332. The active-site S-methylcysteine intermediate is the C375.

This sequence belongs to the radical SAM superfamily. RlmN family. The cofactor is [4Fe-4S] cluster.

Its subcellular location is the cytoplasm. It carries out the reaction adenosine(2503) in 23S rRNA + 2 reduced [2Fe-2S]-[ferredoxin] + 2 S-adenosyl-L-methionine = 2-methyladenosine(2503) in 23S rRNA + 5'-deoxyadenosine + L-methionine + 2 oxidized [2Fe-2S]-[ferredoxin] + S-adenosyl-L-homocysteine. It catalyses the reaction adenosine(37) in tRNA + 2 reduced [2Fe-2S]-[ferredoxin] + 2 S-adenosyl-L-methionine = 2-methyladenosine(37) in tRNA + 5'-deoxyadenosine + L-methionine + 2 oxidized [2Fe-2S]-[ferredoxin] + S-adenosyl-L-homocysteine. Functionally, specifically methylates position 2 of adenine 2503 in 23S rRNA and position 2 of adenine 37 in tRNAs. m2A2503 modification seems to play a crucial role in the proofreading step occurring at the peptidyl transferase center and thus would serve to optimize ribosomal fidelity. This chain is Dual-specificity RNA methyltransferase RlmN, found in Xylella fastidiosa (strain Temecula1 / ATCC 700964).